We begin with the raw amino-acid sequence, 352 residues long: Ni-sirohydrochlorin a,c-diamide reductive cyclase complex, component CfbD (352 aa).

It belongs to the NifD/NifK/NifE/NifN family. As to quaternary structure, homodimer or monomer. The Ni-sirohydrochlorin a,c-diamide reductive cyclase complex is composed of a NifH homolog component CfbC and a NifD homolog component CfbD. It depends on [4Fe-4S] cluster as a cofactor.

It carries out the reaction Ni-sirohydrochlorin a,c-diamide + 3 AH2 + ATP + H2O = 15,17(3)-seco-F430-17(3)-acid + 3 A + ADP + phosphate. Functionally, involved in the biosynthesis of the unique nickel-containing tetrapyrrole coenzyme F430, the prosthetic group of methyl-coenzyme M reductase (MCR), which plays a key role in methanogenesis and anaerobic methane oxidation. Catalyzes both the six-electron reduction of the tetrahydroporphyrin ring system and the gamma-lactamization of the c-acetamide side chain of Ni-sirohydrochlorin a,c-diamide to yield 15,17(3)-seco-F430-17(3)-acid (seco-F430), the last intermediate in the biosynthesis of the coenzyme F430. The sequence is that of Ni-sirohydrochlorin a,c-diamide reductive cyclase complex, component CfbD from Methanocaldococcus jannaschii (strain ATCC 43067 / DSM 2661 / JAL-1 / JCM 10045 / NBRC 100440) (Methanococcus jannaschii).